Reading from the N-terminus, the 373-residue chain is Dof zinc finger protein 3 (373 aa).

A disordered region spans residues 1–23; that stretch reads MASGGALSPVEEKPTVVKTTKAE. Over residues 10–23 the composition is skewed to basic and acidic residues; sequence VEEKPTVVKTTKAE. The segment at 45-99 adopts a Dof-type zinc-finger fold; sequence PCCPRCNSIKTKFCYYNNYSMAQPRYFCRECRRYWTQGGSLRNVPVGGGCRKSKR. Positions 47, 50, 72, and 75 each coordinate Zn(2+). The tract at residues 297 to 327 is disordered; that stretch reads ALGGADEQQGGGDGGEAVMTKDTGGGASSSA.

In terms of assembly, interacts with RISBZ1/BZIP58.

It localises to the nucleus. Functionally, transcriptional activator that binds specifically to the DNA consensus core sequence 5'-AAAG-3' also known as prolamin box. Can activate the expression of genes encoding for the seed storage proteins glutelin, prolamin and globulin. Functions synergistically with RISBZ/BZIP58 to positively regulate quantitatively many seed storage proteins. Functions synergistically with RISBZ1/BZIP58 to positively regulate some metabolic enzymes, such as alanine aminotransferase and pyruvate phosphate dikinase, that are expressed in developing seeds. Functions synergistically with RISBZ1/BZIP58 to positively regulate genes that are key players in the development of aleurone layers. Functions synergistically with RISBZ1/BZIP58 to positively regulate the glutelin GLUD-1 gene in endosperm of developing seeds. Can activate the expression of the bifunctional lysine-degrading enzyme, lysine ketoglutarate reductase/saccharopine dehydrogenase (LKR/SDH), one of the key regulators determining free lysine content in plants. In germinating seeds, involved in the gibberellin-mediated activation of the alpha-amylase AMY1.1/AMY1A gene. The sequence is that of Dof zinc finger protein 3 from Oryza sativa subsp. japonica (Rice).